Reading from the N-terminus, the 172-residue chain is NADH-ubiquinone oxidoreductase chain 6 (172 aa).

Helical transmembrane passes span 1 to 21 (MNNY…GLAL), 38 to 58 (VGCL…VFLI), 86 to 106 (WLIL…ICVL), and 147 to 167 (CATW…FIII).

It belongs to the complex I subunit 6 family. In terms of assembly, core subunit of respiratory chain NADH dehydrogenase (Complex I) which is composed of 45 different subunits.

Its subcellular location is the mitochondrion inner membrane. The enzyme catalyses a ubiquinone + NADH + 5 H(+)(in) = a ubiquinol + NAD(+) + 4 H(+)(out). Functionally, core subunit of the mitochondrial membrane respiratory chain NADH dehydrogenase (Complex I) which catalyzes electron transfer from NADH through the respiratory chain, using ubiquinone as an electron acceptor. Essential for the catalytic activity and assembly of complex I. The chain is NADH-ubiquinone oxidoreductase chain 6 (Mtnd6) from Mus musculus (Mouse).